A 137-amino-acid chain; its full sequence is Large-conductance mechanosensitive channel (137 aa).

2 helical membrane-spanning segments follow: residues 10–30 (FAMRGNVVDLAVGVIIGAAFG) and 76–96 (GVFLQTVFDFVIVAFAIFMAI).

It belongs to the MscL family. Homopentamer.

It is found in the cell inner membrane. In terms of biological role, channel that opens in response to stretch forces in the membrane lipid bilayer. May participate in the regulation of osmotic pressure changes within the cell. This Erwinia tasmaniensis (strain DSM 17950 / CFBP 7177 / CIP 109463 / NCPPB 4357 / Et1/99) protein is Large-conductance mechanosensitive channel.